The chain runs to 408 residues: MDKLLERFLHYVSLDTQSKSGVRQVPSTEGQWKLLRLLKQQLEEMGLVNITLSEKGTLMATLPANVEGDIPAIGFISHVDTSPDFSGKNVTPQIVENYRGGDIALGIGDEVLSPVMFPVLHQLLGQTLITTDGKTLLGADDKAGVAEIMTALAVLKGNNIPHGEIKVAFTPDEEVGKGAKHFDVEAFGAQWAYTVDGGGVGELEFENFNAASVNIKIVGNNVHPGTAKGVMVNALSLAARIHAEVPVDEAPETTEGYEGFYHLASMKGTVDRADMHYIIRDFDRKQFEARKRKMMEIAKKVGKGLHPDCYIELVIEDSYYNMREKVVEHPHILDIAQQAMRDCDITPEMKPIRGGTDGAQLSFMGLPCPNLFTGGYNYHGKHEFVTLEGMEKAVQVIVRIAELTAKQQ.

Residue histidine 78 coordinates Zn(2+). Residue aspartate 80 is part of the active site. Aspartate 140 is a binding site for Zn(2+). Glutamate 173 (proton acceptor) is an active-site residue. Zn(2+)-binding residues include glutamate 174, aspartate 196, and histidine 379.

Belongs to the peptidase M20B family. Requires Zn(2+) as cofactor.

It localises to the cytoplasm. The catalysed reaction is Release of the N-terminal residue from a tripeptide.. Cleaves the N-terminal amino acid of tripeptides. The chain is Peptidase T from Salmonella arizonae (strain ATCC BAA-731 / CDC346-86 / RSK2980).